We begin with the raw amino-acid sequence, 472 residues long: 6-phosphogluconate dehydrogenase, decarboxylating (472 aa).

Residues 10-15, 33-35, 74-76, and Asn102 each bind NADP(+); these read GMAVMG, NRT, and VQA. Substrate is bound by residues Asn102 and 128-130; that span reads SGG. Lys184 (proton acceptor) is an active-site residue. Position 187–188 (187–188) interacts with substrate; that stretch reads HN. The active-site Proton donor is the Glu191. 5 residues coordinate substrate: Tyr192, Lys262, Arg289, Arg447, and His453.

Belongs to the 6-phosphogluconate dehydrogenase family. Homodimer.

The enzyme catalyses 6-phospho-D-gluconate + NADP(+) = D-ribulose 5-phosphate + CO2 + NADPH. It functions in the pathway carbohydrate degradation; pentose phosphate pathway; D-ribulose 5-phosphate from D-glucose 6-phosphate (oxidative stage): step 3/3. Functionally, catalyzes the oxidative decarboxylation of 6-phosphogluconate to ribulose 5-phosphate and CO(2), with concomitant reduction of NADP to NADPH. The sequence is that of 6-phosphogluconate dehydrogenase, decarboxylating (gnd) from Lactococcus lactis subsp. lactis (strain IL1403) (Streptococcus lactis).